The following is a 317-amino-acid chain: tRNA dimethylallyltransferase (317 aa).

13–20 (GPTASGKS) is a binding site for ATP. 15-20 (TASGKS) is a binding site for substrate.

The protein belongs to the IPP transferase family. Monomer. It depends on Mg(2+) as a cofactor.

It catalyses the reaction adenosine(37) in tRNA + dimethylallyl diphosphate = N(6)-dimethylallyladenosine(37) in tRNA + diphosphate. Functionally, catalyzes the transfer of a dimethylallyl group onto the adenine at position 37 in tRNAs that read codons beginning with uridine, leading to the formation of N6-(dimethylallyl)adenosine (i(6)A). The sequence is that of tRNA dimethylallyltransferase from Kineococcus radiotolerans (strain ATCC BAA-149 / DSM 14245 / SRS30216).